The following is a 436-amino-acid chain: Retinoic acid receptor RXR (436 aa).

The interval 1-108 (MDRSEGMDTL…GPSPSPGLPH (108 aa)) is disordered. The modulating stretch occupies residues 1 to 116 (MDRSEGMDTL…PHSSLHTKHI (116 aa)). Residues 13 to 22 (SMPSGMSMGM) show a composition bias toward low complexity. Composition is skewed to polar residues over residues 40 to 49 (SSLTSPTSTH) and 62 to 76 (MASSTQPSPGPQQMH). Over residues 85–98 (SSMGSPPMLCLSPS) the composition is skewed to low complexity. 2 consecutive NR C4-type zinc fingers follow at residues 117–137 (CAICGDRASGKHYGVYSCEGC) and 153–172 (CRDDKNCMIDKRQRNRCQYC). The nuclear receptor DNA-binding region spans 117–182 (CAICGDRASG…RYMKCLSMGM (66 aa)). The segment at 183–206 (KREAVQEERQRVKEKGDGEVESTS) is hinge. Positions 189–200 (EERQRVKEKGDG) are enriched in basic and acidic residues. Positions 189–209 (EERQRVKEKGDGEVESTSGAN) are disordered. The NR LBD domain occupies 209-432 (NNDMPVEQIL…TFLMEMLENP (224 aa)). Positions 290 and 301 each coordinate 9-cis-retinoate.

It belongs to the nuclear hormone receptor family. NR2 subfamily. In terms of assembly, homodimer (via ligand-binding domain). Heterodimer. Homotetramer consisting of 2 canonical homodimers. Within the tetramer, each monomer binds one molecule of 9C-RA and a NCOA1-derived peptide containing an L-X(2)-L-L motif.

The protein localises to the nucleus. Ligand-dependent transcription factor probably involved in the retinoic acid response pathway. Binds 9-cis-retinoic acid (9C-RA) and, to a lesser extent, docosahexaenoic acid (DHA), phytanic acid, methoprene acid and oleic acid. Binds to double-stranded DNA sequences containing direct repeats (DR) with the consensus sequence 5'-[AG]GGTCA-3' and 1, 2, 3, 4 or 5 nucleotides in between (DR1, DR2, DR3. DR4 and DR5, respectively). Binding to DR1 is strongest. Transactivates gene expression when 9C-RA or DHA is bound. This is Retinoic acid receptor RXR from Biomphalaria glabrata (Bloodfluke planorb).